The chain runs to 389 residues: Glutamate 5-kinase (389 aa).

An ATP-binding site is contributed by K16. Substrate contacts are provided by S56, D143, and N155. 175–176 (SD) serves as a coordination point for ATP. Positions 281 to 358 (AGELHVDDGA…AEIETILGYP (78 aa)) constitute a PUA domain.

This sequence belongs to the glutamate 5-kinase family.

The protein resides in the cytoplasm. The enzyme catalyses L-glutamate + ATP = L-glutamyl 5-phosphate + ADP. It participates in amino-acid biosynthesis; L-proline biosynthesis; L-glutamate 5-semialdehyde from L-glutamate: step 1/2. Functionally, catalyzes the transfer of a phosphate group to glutamate to form L-glutamate 5-phosphate. The polypeptide is Glutamate 5-kinase (Rhizobium johnstonii (strain DSM 114642 / LMG 32736 / 3841) (Rhizobium leguminosarum bv. viciae)).